The sequence spans 261 residues: Segregation and condensation protein A (261 aa).

This sequence belongs to the ScpA family. As to quaternary structure, component of a cohesin-like complex composed of ScpA, ScpB and the Smc homodimer, in which ScpA and ScpB bind to the head domain of Smc. The presence of the three proteins is required for the association of the complex with DNA.

Its subcellular location is the cytoplasm. Functionally, participates in chromosomal partition during cell division. May act via the formation of a condensin-like complex containing Smc and ScpB that pull DNA away from mid-cell into both cell halves. This chain is Segregation and condensation protein A, found in Leptospira interrogans serogroup Icterohaemorrhagiae serovar copenhageni (strain Fiocruz L1-130).